Consider the following 342-residue polypeptide: Probable alcohol acetyltransferase (342 aa).

The transit peptide at 1-38 directs the protein to the mitochondrion; the sequence is MMILGKAGILAQYGTIYVRQNTIRNNLSSCIFKQSLCA. A propeptide spans 39–46 (removed in mature form); the sequence is FHSLAKVL. One can recognise an AB hydrolase-1 domain in the interval 75–326; sequence PPIIILHGLF…AGHWVNAEKP (252 aa). Residues S152 and H319 each act as charge relay system in the active site.

The protein belongs to the AB hydrolase superfamily. Processed by both the mitochondrial processing peptidase (MPP) and the mitochondrial octapeptidyl aminopeptidase (OCT1).

It localises to the mitochondrion. Its function is as follows. Probable alcohol acetyltransferase that uses acetyl-CoA to synthesize acetate esters from various alcohols. Not involved in the synthesis of ethyl acetate. The chain is Probable alcohol acetyltransferase (IMO32) from Saccharomyces cerevisiae (strain ATCC 204508 / S288c) (Baker's yeast).